We begin with the raw amino-acid sequence, 488 residues long: 3-octaprenyl-4-hydroxybenzoate carboxy-lyase (488 aa).

Mn(2+) is bound at residue N172. Prenylated FMN-binding positions include 175–177, 189–191, and 194–195; these read IYR, RWL, and RG. E238 contacts Mn(2+). The active-site Proton donor is D287.

This sequence belongs to the UbiD family. In terms of assembly, homohexamer. Requires prenylated FMN as cofactor. The cofactor is Mn(2+).

It localises to the cell membrane. The enzyme catalyses a 4-hydroxy-3-(all-trans-polyprenyl)benzoate + H(+) = a 2-(all-trans-polyprenyl)phenol + CO2. It participates in cofactor biosynthesis; ubiquinone biosynthesis. Its function is as follows. Catalyzes the decarboxylation of 3-octaprenyl-4-hydroxy benzoate to 2-octaprenylphenol, an intermediate step in ubiquinone biosynthesis. This chain is 3-octaprenyl-4-hydroxybenzoate carboxy-lyase, found in Halorhodospira halophila (strain DSM 244 / SL1) (Ectothiorhodospira halophila (strain DSM 244 / SL1)).